Here is a 317-residue protein sequence, read N- to C-terminus: MVCPNSNPVVEKVCELYEQISRLENLSPSKDVNVLFTDLVHTCMPPNPIDVSKLCQKIQEIRSHLIKLCGQAEGLLESHFSKILSSYENPLQHLHIFPYFDNYIKLSLLEYNILTKNTTNIPKKIAFIGSGPLPLTSLVLATKHLKTTCFHNYDIDVDANFMASALVAADPDMSSRMTFHTADVMDVTCALKDYDVVFLAALVGMDKEDKVKVVDHLAKYMSPGATLMLRSAHGARAFLYPVLDPRDLRGFEVLSVYHPTDEVINSVIIARKLPVPSVPLLDGLGAYVLPSKCACAEIHAFNPLNKMNLVEEFALEE.

This sequence belongs to the nicotianamine synthase (NAS)-like family. As to quaternary structure, homomultimer. Leaves and roots.

It carries out the reaction 3 S-adenosyl-L-methionine = nicotianamine + 3 S-methyl-5'-thioadenosine + 3 H(+). In terms of biological role, synthesizes nicotianamine, a polyamine that serves as a sensor for the physiological iron status within the plant, and/or might be involved in the transport of iron. The polypeptide is Nicotianamine synthase (CHLN) (Solanum lycopersicum (Tomato)).